The chain runs to 335 residues: MSPSATDTTEGVDPTILTLRKVLTSESEPLARRFRALFSLKHLACLQPPTEKTLPAIQAIAAAFTSPSALLKHELAYCLGQTRNPESVPFLQQVAKDTEQDTMCRHEAAEALGALGYEDSLEILKALRDNQNESDVIRETCDIAVDRILWENSEARKAEKLKTSDFTSIDPAPPLPMTASEPSIPEIEKTLLDTSLPLFLRYRAMFALRDLASPPDLPTATRAVEALAKGLKDPSALFRHEIAFVFGQLCHPASIPSLTEALSNQSEAGMVRHEAAEALGSLGDCEGVEETLRKFLNDPEQVVRDSVIVALDMAEYEKNGEVEYALVPDAGVAAA.

5 HEAT-like PBS-type repeats span residues Leu-71–Asp-97, Cys-104–Asn-130, Leu-200–Asp-233, Phe-238–Asn-264, and Val-271–Asp-298. Fe cation is bound by residues His-73, Glu-74, His-106, and Glu-107. 4 residues coordinate Fe cation: His-240, Glu-241, His-273, and Glu-274.

Belongs to the deoxyhypusine hydroxylase family. It depends on Fe(2+) as a cofactor.

It localises to the cytoplasm. Its subcellular location is the nucleus. The catalysed reaction is [eIF5A protein]-deoxyhypusine + AH2 + O2 = [eIF5A protein]-hypusine + A + H2O. The protein operates within protein modification; eIF5A hypusination. Its function is as follows. Catalyzes the hydroxylation of the N(6)-(4-aminobutyl)-L-lysine intermediate to form hypusine, an essential post-translational modification only found in mature eIF-5A factor. This is Deoxyhypusine hydroxylase (lia1) from Neosartorya fischeri (strain ATCC 1020 / DSM 3700 / CBS 544.65 / FGSC A1164 / JCM 1740 / NRRL 181 / WB 181) (Aspergillus fischerianus).